We begin with the raw amino-acid sequence, 85 residues long: Small ribosomal subunit protein bS20 (85 aa).

Disordered regions lie at residues 1-25 (MANIKSAIKRAKLSEERRAHNASIK) and 62-85 (ARKGLIHQNAASRQKSRLAKQVNA).

Belongs to the bacterial ribosomal protein bS20 family.

In terms of biological role, binds directly to 16S ribosomal RNA. The polypeptide is Small ribosomal subunit protein bS20 (Bacillus cereus (strain G9842)).